Consider the following 204-residue polypeptide: IMPACT family member YigZ (204 aa).

It belongs to the IMPACT family. In terms of assembly, monomer.

In Escherichia coli (strain K12), this protein is IMPACT family member YigZ (yigZ).